A 541-amino-acid polypeptide reads, in one-letter code: Chaperonin GroEL 2 (541 aa).

Residues 29 to 32, 86 to 90, glycine 413, 477 to 479, and aspartate 493 contribute to the ATP site; these read TLGP, DGTTT, and NAA.

It belongs to the chaperonin (HSP60) family. Forms a cylinder of 14 subunits composed of two heptameric rings stacked back-to-back. Interacts with the co-chaperonin GroES.

Its subcellular location is the cytoplasm. The enzyme catalyses ATP + H2O + a folded polypeptide = ADP + phosphate + an unfolded polypeptide.. Together with its co-chaperonin GroES, plays an essential role in assisting protein folding. The GroEL-GroES system forms a nano-cage that allows encapsulation of the non-native substrate proteins and provides a physical environment optimized to promote and accelerate protein folding. In Nocardioides sp. (strain ATCC BAA-499 / JS614), this protein is Chaperonin GroEL 2.